Reading from the N-terminus, the 195-residue chain is ATP-dependent Clp protease proteolytic subunit (195 aa).

Ser-102 functions as the Nucleophile in the catalytic mechanism. His-125 is a catalytic residue.

The protein belongs to the peptidase S14 family. Component of the chloroplastic Clp protease core complex.

The protein resides in the plastid. It localises to the chloroplast stroma. The catalysed reaction is Hydrolysis of proteins to small peptides in the presence of ATP and magnesium. alpha-casein is the usual test substrate. In the absence of ATP, only oligopeptides shorter than five residues are hydrolyzed (such as succinyl-Leu-Tyr-|-NHMec, and Leu-Tyr-Leu-|-Tyr-Trp, in which cleavage of the -Tyr-|-Leu- and -Tyr-|-Trp bonds also occurs).. Functionally, cleaves peptides in various proteins in a process that requires ATP hydrolysis. Has a chymotrypsin-like activity. Plays a major role in the degradation of misfolded proteins. The polypeptide is ATP-dependent Clp protease proteolytic subunit (Phaseolus vulgaris (Kidney bean)).